Reading from the N-terminus, the 1221-residue chain is Putative DNA-directed RNA polymerase II subunit RPB2 homolog (1221 aa).

2 stretches are compositionally biased toward low complexity: residues 1 to 54 (MSRG…SASS) and 692 to 701 (PAPSSSPSDS). Disordered regions lie at residues 1-63 (MSRG…PMSE) and 673-701 (RGSGYDSPPAPEERDIEMDPAPSSSPSDS). Position 823 (aspartate 823) interacts with Mg(2+). Zn(2+) contacts are provided by cysteine 1174, cysteine 1177, cysteine 1187, and cysteine 1190. Residues 1174–1190 (CKECGRISDHFEYCRMC) form a C4-type zinc finger.

This sequence belongs to the RNA polymerase beta chain family.

It carries out the reaction RNA(n) + a ribonucleoside 5'-triphosphate = RNA(n+1) + diphosphate. Component of the DNA-dependent RNA polymerase that catalyzes the transcription of DNA into RNA using the four ribonucleoside triphosphates as substrates. Second largest component of RNA polymerase II which synthesizes mRNA precursors and many functional non-coding RNAs. Proposed to contribute to the polymerase catalytic activity and forms the polymerase active center together with the largest subunit. The chain is Putative DNA-directed RNA polymerase II subunit RPB2 homolog from Dryophytes versicolor (chameleon treefrog).